The following is a 121-amino-acid chain: Large ribosomal subunit protein uL14c (121 aa).

It belongs to the universal ribosomal protein uL14 family. As to quaternary structure, part of the 50S ribosomal subunit.

The protein localises to the plastid. It is found in the apicoplast. Functionally, binds to 23S rRNA. The protein is Large ribosomal subunit protein uL14c (rpl14) of Eimeria tenella (Coccidian parasite).